The sequence spans 385 residues: Chaperone protein DnaJ (385 aa).

The J domain maps to 5–70 (DYYEVLGVAK…QKRAAYDRFG (66 aa)). A CR-type zinc finger spans residues 141–219 (GKTETIRIPT…CSGAGRVNRE (79 aa)). Residues Cys154, Cys157, Cys171, Cys174, Cys193, Cys196, Cys207, and Cys210 each contribute to the Zn(2+) site. CXXCXGXG motif repeat units lie at residues 154–161 (CETCSGTG), 171–178 (CSTCGGYG), 193–200 (CPNCHGRG), and 207–214 (CTACSGAG).

It belongs to the DnaJ family. Homodimer. Requires Zn(2+) as cofactor.

It localises to the cytoplasm. Participates actively in the response to hyperosmotic and heat shock by preventing the aggregation of stress-denatured proteins and by disaggregating proteins, also in an autonomous, DnaK-independent fashion. Unfolded proteins bind initially to DnaJ; upon interaction with the DnaJ-bound protein, DnaK hydrolyzes its bound ATP, resulting in the formation of a stable complex. GrpE releases ADP from DnaK; ATP binding to DnaK triggers the release of the substrate protein, thus completing the reaction cycle. Several rounds of ATP-dependent interactions between DnaJ, DnaK and GrpE are required for fully efficient folding. Also involved, together with DnaK and GrpE, in the DNA replication of plasmids through activation of initiation proteins. In Methylorubrum extorquens (strain PA1) (Methylobacterium extorquens), this protein is Chaperone protein DnaJ.